The primary structure comprises 213 residues: Orotate phosphoribosyltransferase (213 aa).

Lys-26 serves as a coordination point for 5-phospho-alpha-D-ribose 1-diphosphate. 34–35 provides a ligand contact to orotate; sequence FF. Residues 72–73, Arg-99, Lys-100, Lys-103, His-105, and 124–132 each bind 5-phospho-alpha-D-ribose 1-diphosphate; these read YK and DDVITAGTA. The orotate site is built by Thr-128 and Arg-156.

Belongs to the purine/pyrimidine phosphoribosyltransferase family. PyrE subfamily. As to quaternary structure, homodimer. The cofactor is Mg(2+).

It catalyses the reaction orotidine 5'-phosphate + diphosphate = orotate + 5-phospho-alpha-D-ribose 1-diphosphate. The protein operates within pyrimidine metabolism; UMP biosynthesis via de novo pathway; UMP from orotate: step 1/2. In terms of biological role, catalyzes the transfer of a ribosyl phosphate group from 5-phosphoribose 1-diphosphate to orotate, leading to the formation of orotidine monophosphate (OMP). This Haemophilus influenzae (strain 86-028NP) protein is Orotate phosphoribosyltransferase.